The following is a 481-amino-acid chain: F-box protein At1g49360 (481 aa).

Residues 105–156 enclose the F-box domain; sequence LKEDLFLPSDLVRLILSRLSFKDNIRSSTVCKAWGDIAASVRVKSRRCWLLY.

The sequence is that of F-box protein At1g49360 from Arabidopsis thaliana (Mouse-ear cress).